We begin with the raw amino-acid sequence, 252 residues long: tRNA (guanine-N(1)-)-methyltransferase (252 aa).

S-adenosyl-L-methionine is bound by residues Gly116 and Leu135–Leu140.

This sequence belongs to the RNA methyltransferase TrmD family. In terms of assembly, homodimer.

It localises to the cytoplasm. The catalysed reaction is guanosine(37) in tRNA + S-adenosyl-L-methionine = N(1)-methylguanosine(37) in tRNA + S-adenosyl-L-homocysteine + H(+). Its function is as follows. Specifically methylates guanosine-37 in various tRNAs. In Limosilactobacillus fermentum (strain NBRC 3956 / LMG 18251) (Lactobacillus fermentum), this protein is tRNA (guanine-N(1)-)-methyltransferase.